The sequence spans 567 residues: MKRNISMFLQLLLIILMMISFLFTSLLVPSVSATTLNTISTCLINYKVSNFSVYPTRNHAGNSYYNLLDFSIQNLRFAACSKPKPTVIIVPESKEQLVSSVLCCRQGSYEIRVRCGGHSYEGTSSVSFDGSPFVVIDLMKLDGVSVDVDSETAWVQGGATLGQTYYAISRASNVHGFSAGSCPTVGVGGHISGGGYGFLSRKYGLAADNVVDALLVDAEGRLLDRKAMGEEIFWAIRGGGGGIWGIIYAWKIRLLKVPKTVTSFIIPRPGSKRYVSQLVHKWQLVAPKLEDEFYLSISMSSPSKGNIPIEINAQFSGFYLGTKTEAISILNEAFSELGVLEGDCKEMSWIESTLFFSELDDVANSSDVSRLKERYFENKSYFKAKSDYVKTPISVGGIMTALNVLEKEPNGHVILDPYGGAMQRISEEAIAFPHRKGNLFGIQYLVVWKEKDNNNIVKSNIGYIEWIREFYNTMAPHVSSSPRAAYVNYMDLDLGVMDDYLLPCTSTTASANHAVERARVWGEKYFLNNYDRLVKAKTKIDPLNVFRHQQGIPPLFASMQEYTYSSK.

The first 33 residues, 1–33 (MKRNISMFLQLLLIILMMISFLFTSLLVPSVSA), serve as a signal peptide directing secretion. Cysteines 42 and 103 form a disulfide. Asn50 is a glycosylation site (N-linked (GlcNAc...) asparagine). The region spanning 81-257 (SKPKPTVIIV…YAWKIRLLKV (177 aa)) is the FAD-binding PCMH-type domain. Residue His118 is modified to Pros-8alpha-FAD histidine. N-linked (GlcNAc...) asparagine glycans are attached at residues Asn364 and Asn378.

Belongs to the oxygen-dependent FAD-linked oxidoreductase family. It depends on FAD as a cofactor. Mostly expressed in roots at low levels.

The protein resides in the vacuole. Its pathway is alkaloid biosynthesis; nicotine biosynthesis. Involved in the biosynthesis of pyridine alkaloid natural products, leading mainly to the production of anabasine, anatabine, nicotine and nornicotine, effective deterrents against herbivores with antiparasitic and pesticide properties (neurotoxins); nornicotine serves as the precursor in the synthesis of the carcinogen compound N'-nitrosonornicotine (NNN). Catalyzes a late oxidation step subsequent to the pyridine ring condensation reaction in the biosynthesis of alkaloids. The sequence is that of Berberine bridge enzyme-like D-1 from Nicotiana tabacum (Common tobacco).